The chain runs to 719 residues: Histone-lysine N-methyltransferase SETDB2 (719 aa).

The segment covering 72–82 (SQKEVNAQSSD) has biased composition (polar residues). Residues 72–102 (SQKEVNAQSSDPMPVTQKEQENKSNAFPSTS) are disordered. The region spanning 157–229 (LNLKGENPLQ…DNFSFNTYVQ (73 aa)) is the MBD domain. Positions 291 to 364 (DSCDCSEGCI…LCQNRVVQHG (74 aa)) constitute a Pre-SET domain. The Zn(2+) site is built by C293, C295, C299, C305, C307, C345, C349, C351, and C356. Residues 367-694 (VRLQVFKTEQ…ARTELTWDYG (328 aa)) enclose the SET domain. Residues 377–379 (KGW) and D418 contribute to the S-adenosyl-L-methionine site. Residues 508–547 (FVSSESVTPEDNDGFKPPREHLNSKTKGAQKDSSSNHVDE) form a disordered region. Over residues 520-530 (DGFKPPREHLN) the composition is skewed to basic and acidic residues. The span at 532–543 (KTKGAQKDSSSN) shows a compositional bias: polar residues. Residues R648 and 651–652 (NH) each bind S-adenosyl-L-methionine. C654, C707, C709, and C714 together coordinate Zn(2+).

The protein belongs to the class V-like SAM-binding methyltransferase superfamily. In terms of tissue distribution, ubiquitous. Highest expression in heart, testis and ovary.

It localises to the nucleus. Its subcellular location is the chromosome. It catalyses the reaction N(6),N(6)-dimethyl-L-lysyl(9)-[histone H3] + S-adenosyl-L-methionine = N(6),N(6),N(6)-trimethyl-L-lysyl(9)-[histone H3] + S-adenosyl-L-homocysteine + H(+). In terms of biological role, histone methyltransferase involved in left-right axis specification in early development and mitosis. Specifically trimethylates 'Lys-9' of histone H3 (H3K9me3). H3K9me3 is a specific tag for epigenetic transcriptional repression that recruits HP1 (CBX1, CBX3 and/or CBX5) proteins to methylated histones. Contributes to H3K9me3 in both the interspersed repetitive elements and centromere-associated repeats. Plays a role in chromosome condensation and segregation during mitosis. This Homo sapiens (Human) protein is Histone-lysine N-methyltransferase SETDB2 (SETDB2).